The chain runs to 81 residues: RNA-binding protein Hfq (81 aa).

The region spanning 11–71 (DIFLNSARKN…VSTITPLRPI (61 aa)) is the Sm domain.

Belongs to the Hfq family. In terms of assembly, homohexamer.

Its function is as follows. RNA chaperone that binds small regulatory RNA (sRNAs) and mRNAs to facilitate mRNA translational regulation in response to envelope stress, environmental stress and changes in metabolite concentrations. Also binds with high specificity to tRNAs. This is RNA-binding protein Hfq from Clostridium acetobutylicum (strain ATCC 824 / DSM 792 / JCM 1419 / IAM 19013 / LMG 5710 / NBRC 13948 / NRRL B-527 / VKM B-1787 / 2291 / W).